Consider the following 218-residue polypeptide: Glutathione S-transferase D7 (218 aa).

Residues 1 to 82 (MTPVLYYLPP…YLVSAYGKDE (82 aa)) form the GST N-terminal domain. Glutathione-binding positions include serine 11, 52–54 (HCI), and 66–68 (ESR). One can recognise a GST C-terminal domain in the interval 88-207 (DFRSRAIVDQ…KEINETGAET (120 aa)).

This sequence belongs to the GST superfamily. Theta family. As to quaternary structure, homodimer.

It catalyses the reaction RX + glutathione = an S-substituted glutathione + a halide anion + H(+). In terms of biological role, conjugation of reduced glutathione to a wide number of exogenous and endogenous hydrophobic electrophiles. This chain is Glutathione S-transferase D7, found in Anopheles gambiae (African malaria mosquito).